The primary structure comprises 916 residues: MGDARDLCPHLDCIGEVTKEDLLLKSKGTCQSCGVAGPNLWACLQVTCPYVGCGESFADHSSIHAQVKKHNLTVNLTTFRVWCYACEREVFLEQRLAVHLASSSARLSEQDSPPPSHPLKAVPIAVADEGESESEDDDLKPRGLTGMKNLGNSCYMNAALQALSNCPPLTQFFLECGGLVRTDKKPALCKSYQKLISEVWHKKRPSYVVPTSLSHGIKLVNPMFRGYAQQDTQEFLRCLMDQLHEELKEPMVAAVAALTDARDSDSSDTDERRDGDRSPSEDEFLSCDSSSDRGEGDGQGRGGGSSKAEMELLISDEAGRAISEKERMKDRKFSWGQQRTNSEQVDEDADVDTAMASLDEQSREAQPPSPRSTSPCQTPEPDNEAHIRSSSRPCSPVHHHHEGHSKLSSSPPRASPVRMGPSYVLKKAQVPSTGGRRRKEQSYRSVISDVFNGSVLSLVQCLTCDRVSTTVETFQDLSLPIPGKEDLAKLHSAIYQNVPAKPGACGDSYSSQGWLAFIVEYIRRFVVSCTPSWFWGPVVTLEDCLAAFFAADELKGDNMYSCERCKKLRNGVKYCKVLCLPEILCVHLKRFRHEVMYSFKVSSHVSFPLEGLDLRPFLAKECTSQVTTYDLLSVICHHGTAGSGHYIAYCQNVINGQWYEFDDQYVTEVHETVVQNVEAYVLFYRKSSEEAMRERQQVVSLAAMREPSLLRFYVSREWLNKFNTFAEPGPITNHTFLCSHGGIPPNKYHYIDDLVVILPQSVWEHLYSRFGGGPAVNHLYVCSICQVEIEALAKRRRVEIDTFIKLNKAFQAEESPAVIYCISMHWFREWEAFVKGKDSEPPGPIDNSRIAQVKGSGHIQLKQGADCGQISEETWTYLSSLYGGGPEIAIRQSVAQLPDPESLHGEQKIEAETRAL.

A UBP-type zinc finger spans residues 6–111; the sequence is DLCPHLDCIG…SSSARLSEQD (106 aa). C8, H10, C30, C33, C43, C48, C53, H60, H64, H70, C83, and C86 together coordinate Zn(2+). Phosphoserine is present on residues S112, S132, and S134. Residues 145 to 687 enclose the USP domain; sequence TGMKNLGNSC…EAYVLFYRKS (543 aa). C154 serves as the catalytic Nucleophile. The interval 258-420 is disordered; it reads LTDARDSDSS…PPRASPVRMG (163 aa). A Phosphothreonine modification is found at T259. Residues 260–280 show a composition bias toward basic and acidic residues; the sequence is DARDSDSSDTDERRDGDRSPS. S306 carries the post-translational modification Phosphoserine. Over residues 317-333 the composition is skewed to basic and acidic residues; that stretch reads EAGRAISEKERMKDRKF. S369 carries the post-translational modification Phosphoserine. T378 is modified (phosphothreonine). Phosphoserine occurs at positions 410 and 415. H645 serves as the catalytic Proton acceptor. DUSP domains are found at residues 689-782 and 791-894; these read EEAM…LYVC and ALAK…RQSV.

It belongs to the peptidase C19 family. USP20/USP33 subfamily. As to quaternary structure, interacts with VHL, leading to its ubiquitination and subsequent degradation. Interacts with CCP110. Interacts with DIO2. Interacts with HIF1A. Interacts with ADRB2. Interacts with USP18. Post-translationally, ubiquitinated via a VHL-dependent pathway for proteasomal degradation.

It is found in the cytoplasm. It localises to the endoplasmic reticulum. Its subcellular location is the perinuclear region. The protein resides in the cytoskeleton. The protein localises to the microtubule organizing center. It is found in the centrosome. The enzyme catalyses Thiol-dependent hydrolysis of ester, thioester, amide, peptide and isopeptide bonds formed by the C-terminal Gly of ubiquitin (a 76-residue protein attached to proteins as an intracellular targeting signal).. In terms of biological role, deubiquitinating enzyme that plays a role in many cellular processes including autophagy, cellular antiviral response or membrane protein biogenesis. Attenuates TLR4-mediated NF-kappa-B signaling by cooperating with beta-arrestin-2/ARRB2 and inhibiting TRAF6 autoubiquitination. Promotes cellular antiviral responses by deconjugating 'Lys-33' and 'Lys-48'-linked ubiquitination of STING1 leading to its stabilization. Plays an essential role in autophagy induction by regulating the ULK1 stability through deubiquitination of ULK1. Acts as a positive regulator for NF-kappa-B activation by TNF-alpha through deubiquitinating 'Lys-48'-linked polyubiquitination of SQSTM1, leading to its increased stability. Acts as a regulator of G-protein coupled receptor (GPCR) signaling by mediating the deubiquitination beta-2 adrenergic receptor (ADRB2). Plays a central role in ADRB2 recycling and resensitization after prolonged agonist stimulation by constitutively binding ADRB2, mediating deubiquitination of ADRB2 and inhibiting lysosomal trafficking of ADRB2. Upon dissociation, it is probably transferred to the translocated beta-arrestins, possibly leading to beta-arrestins deubiquitination and disengagement from ADRB2. This suggests the existence of a dynamic exchange between the ADRB2 and beta-arrestins. Deubiquitinates DIO2, thereby regulating thyroid hormone regulation. Deubiquitinates HIF1A, leading to stabilize HIF1A and enhance HIF1A-mediated activity. Deubiquitinates MCL1, a pivotal member of the anti-apoptotic Bcl-2 protein family to regulate its stability. Within the endoplasmic reticulum, participates with USP33 in the rescue of post-translationally targeted membrane proteins that are inappropriately ubiquitinated by the cytosolic protein quality control in the cytosol. This is Ubiquitin carboxyl-terminal hydrolase 20 (Usp20) from Mus musculus (Mouse).